The sequence spans 541 residues: Chaperonin GroEL (541 aa).

Residues 29–32 (TLGP), 86–90 (DGTTT), G413, 477–479 (DAL), and D493 contribute to the ATP site.

Belongs to the chaperonin (HSP60) family. In terms of assembly, forms a cylinder of 14 subunits composed of two heptameric rings stacked back-to-back. Interacts with the co-chaperonin GroES.

Its subcellular location is the cytoplasm. The catalysed reaction is ATP + H2O + a folded polypeptide = ADP + phosphate + an unfolded polypeptide.. In terms of biological role, together with its co-chaperonin GroES, plays an essential role in assisting protein folding. The GroEL-GroES system forms a nano-cage that allows encapsulation of the non-native substrate proteins and provides a physical environment optimized to promote and accelerate protein folding. In Clostridium beijerinckii (strain ATCC 51743 / NCIMB 8052) (Clostridium acetobutylicum), this protein is Chaperonin GroEL.